Reading from the N-terminus, the 132-residue chain is Small ribosomal subunit protein uS8 (132 aa).

Belongs to the universal ribosomal protein uS8 family. Part of the 30S ribosomal subunit. Contacts proteins S5 and S12.

Its function is as follows. One of the primary rRNA binding proteins, it binds directly to 16S rRNA central domain where it helps coordinate assembly of the platform of the 30S subunit. In Staphylococcus carnosus (strain TM300), this protein is Small ribosomal subunit protein uS8.